The sequence spans 274 residues: Penicillin-insensitive murein endopeptidase (274 aa).

The first 19 residues, 1 to 19 (MKKTAIALLAWFVSSASLA), serve as a signal peptide directing secretion. Disulfide bonds link cysteine 44–cysteine 265, cysteine 187–cysteine 235, and cysteine 216–cysteine 223. Zn(2+)-binding residues include histidine 110, histidine 113, aspartate 120, aspartate 147, histidine 150, and histidine 211. Residues 225–274 (DQPLPPPGDGCGAELQSWFEPPKPGTTKPEKKTPPPLPPSCQALLDEHVL) form a disordered region.

The protein belongs to the peptidase M74 family. In terms of assembly, dimer. Requires Zn(2+) as cofactor.

The protein localises to the periplasm. In terms of biological role, murein endopeptidase that cleaves the D-alanyl-meso-2,6-diamino-pimelyl amide bond that connects peptidoglycan strands. Likely plays a role in the removal of murein from the sacculus. In Salmonella arizonae (strain ATCC BAA-731 / CDC346-86 / RSK2980), this protein is Penicillin-insensitive murein endopeptidase.